The following is a 243-amino-acid chain: CTD nuclear envelope phosphatase 1 homolog (243 aa).

A helical membrane pass occupies residues 11–27 (ALLLLLSKVWTCICFMF). The region spanning 56–223 (SLVQRKTLVL…LSLLPMLDAL (168 aa)) is the FCP1 homology domain.

Belongs to the dullard family.

The protein localises to the membrane. The enzyme catalyses O-phospho-L-seryl-[protein] + H2O = L-seryl-[protein] + phosphate. It catalyses the reaction O-phospho-L-threonyl-[protein] + H2O = L-threonyl-[protein] + phosphate. Functionally, serine/threonine protein phosphatase that may dephosphorylate and activate lipin-like phosphatases. Lipins are phosphatidate phosphatases that catalyze the conversion of phosphatidic acid to diacylglycerol and control the metabolism of fatty acids at different levels. May indirectly modulate the lipid composition of nuclear and/or endoplasmic reticulum membranes and be required for proper nuclear membrane morphology and/or dynamics. May also indirectly regulate the production of lipid droplets and triacylglycerol. This Drosophila melanogaster (Fruit fly) protein is CTD nuclear envelope phosphatase 1 homolog (Dd).